We begin with the raw amino-acid sequence, 506 residues long: Cobyric acid synthase (506 aa).

The GATase cobBQ-type domain maps to 251–448 (DITIAIVQLP…LHGLFDSDAF (198 aa)). C332 (nucleophile) is an active-site residue. Residue H440 is part of the active site.

The protein belongs to the CobB/CobQ family. CobQ subfamily.

It functions in the pathway cofactor biosynthesis; adenosylcobalamin biosynthesis. Its function is as follows. Catalyzes amidations at positions B, D, E, and G on adenosylcobyrinic A,C-diamide. NH(2) groups are provided by glutamine, and one molecule of ATP is hydrogenolyzed for each amidation. This is Cobyric acid synthase from Salmonella arizonae (strain ATCC BAA-731 / CDC346-86 / RSK2980).